An 83-amino-acid chain; its full sequence is Exodeoxyribonuclease 7 small subunit (83 aa).

It belongs to the XseB family. Heterooligomer composed of large and small subunits.

It is found in the cytoplasm. The enzyme catalyses Exonucleolytic cleavage in either 5'- to 3'- or 3'- to 5'-direction to yield nucleoside 5'-phosphates.. Its function is as follows. Bidirectionally degrades single-stranded DNA into large acid-insoluble oligonucleotides, which are then degraded further into small acid-soluble oligonucleotides. In Rhizobium meliloti (strain 1021) (Ensifer meliloti), this protein is Exodeoxyribonuclease 7 small subunit.